The sequence spans 1000 residues: Vacuolar sorting protein 39 (1000 aa).

One can recognise a CNH domain in the interval P16 to V282. The segment at D394–S413 is disordered. The stretch at Y607 to D796 is one CHCR repeat. A disordered region spans residues G844–E864.

The protein belongs to the VAM6/VPS39 family. As to quaternary structure, homooligomer. Component of the homotypic fusion and vacuole protein sorting (HOPS) complex composed of the class C Vps core proteins VPS11, VCL1, VPS18 and VPS33, which in HOPS further associates with VPS39 and VPS41. Interacts directly with VPS11. Binds to RABG3B.

Its subcellular location is the cytoplasm. It localises to the vacuole membrane. Essential protein required during embryogenesis. Believed to act in part as a component of the putative HOPS endosomal tethering complex. HOPS is required for the central vacuole formation. May play a role in clustering and fusion of late endosomes and lysosomes. Plays a role in vesicle-mediated protein trafficking to lysosomal compartments including the endocytic membrane transport and autophagic pathways. Required for fusion of endosomes and autophagosomes with lysosomes. In Arabidopsis thaliana (Mouse-ear cress), this protein is Vacuolar sorting protein 39.